We begin with the raw amino-acid sequence, 465 residues long: Cysteine--tRNA ligase (465 aa).

Position 27 (Cys-27) interacts with Zn(2+). The 'HIGH' region signature appears at 29–39; sequence PTVYDDAHLGH. Zn(2+) is bound by residues Cys-207, His-237, and Glu-241. The 'KMSKS' region signature appears at 269–273; that stretch reads KMSKS. Lys-272 is an ATP binding site.

The protein belongs to the class-I aminoacyl-tRNA synthetase family. As to quaternary structure, monomer. It depends on Zn(2+) as a cofactor.

It localises to the cytoplasm. It catalyses the reaction tRNA(Cys) + L-cysteine + ATP = L-cysteinyl-tRNA(Cys) + AMP + diphosphate. This chain is Cysteine--tRNA ligase, found in Helicobacter pylori (strain G27).